The primary structure comprises 237 residues: NAD(P)H-quinone oxidoreductase subunit K, chloroplastic (237 aa).

[4Fe-4S] cluster-binding residues include cysteine 55, cysteine 56, cysteine 120, and cysteine 151.

This sequence belongs to the complex I 20 kDa subunit family. As to quaternary structure, NDH is composed of at least 16 different subunits, 5 of which are encoded in the nucleus. Requires [4Fe-4S] cluster as cofactor.

It localises to the plastid. It is found in the chloroplast thylakoid membrane. The catalysed reaction is a plastoquinone + NADH + (n+1) H(+)(in) = a plastoquinol + NAD(+) + n H(+)(out). It catalyses the reaction a plastoquinone + NADPH + (n+1) H(+)(in) = a plastoquinol + NADP(+) + n H(+)(out). Functionally, NDH shuttles electrons from NAD(P)H:plastoquinone, via FMN and iron-sulfur (Fe-S) centers, to quinones in the photosynthetic chain and possibly in a chloroplast respiratory chain. The immediate electron acceptor for the enzyme in this species is believed to be plastoquinone. Couples the redox reaction to proton translocation, and thus conserves the redox energy in a proton gradient. The chain is NAD(P)H-quinone oxidoreductase subunit K, chloroplastic from Nephroselmis olivacea (Green alga).